Reading from the N-terminus, the 291-residue chain is MPDFARGPAKARRADPVVDEAAELLDSRALPGMADAAGRAMMDRAMRIVPARSETRVSEQPGFVLHAWPYRETSLILDVFTRDHGRLSMVAKGAKRPHSALRPVLQHFHPISLSWSGRGEVKTLTRAEWVGGMPPLAGDALLSAFYLNELLMRFCPREDGHPALFRHYMATLTRLAHGEAAGLVLRSFERVLLQETGFAVAFDQCLSTGERVQPHLDYVYQPERGVRRAQPSDPSSWPVVSGQTLLDMSQDDYGRAQTALQSRALMRFLLHYYLQGAPLKTRQILIDLHYL.

It belongs to the RecO family.

Its function is as follows. Involved in DNA repair and RecF pathway recombination. This Cupriavidus pinatubonensis (strain JMP 134 / LMG 1197) (Cupriavidus necator (strain JMP 134)) protein is DNA repair protein RecO.